Here is a 26-residue protein sequence, read N- to C-terminus: MAWTAPKITEVPLGAEINSYVCGQKK.

A cross-link (pyrroloquinoline quinone (Glu-Tyr)) is located at residues 16–20 (EINSY).

This sequence belongs to the PqqA family.

Its pathway is cofactor biosynthesis; pyrroloquinoline quinone biosynthesis. In terms of biological role, required for coenzyme pyrroloquinoline quinone (PQQ) biosynthesis. PQQ is probably formed by cross-linking a specific glutamate to a specific tyrosine residue and excising these residues from the peptide. The sequence is that of Coenzyme PQQ synthesis protein A from Gluconacetobacter diazotrophicus (strain ATCC 49037 / DSM 5601 / CCUG 37298 / CIP 103539 / LMG 7603 / PAl5).